A 160-amino-acid polypeptide reads, in one-letter code: uncharacterized protein (160 aa).

This is an uncharacterized protein from Gracula (BFDV).